The chain runs to 142 residues: Ribonuclease VapC25 (142 aa).

A PINc domain is found at 3 to 139; that stretch reads LIDVNVLLAA…ARFASVRHIR (137 aa). Mg(2+)-binding residues include Asp5 and Asp108.

The protein belongs to the PINc/VapC protein family. Mg(2+) serves as cofactor.

Its function is as follows. Toxic component of a type II toxin-antitoxin (TA) system. An RNase. Upon expression in M.smegmatis inhibits colony formation. Its toxic effect is neutralized by coexpression with cognate antitoxin VapB25. The protein is Ribonuclease VapC25 of Mycobacterium tuberculosis (strain ATCC 25618 / H37Rv).